Consider the following 108-residue polypeptide: Large ribosomal subunit protein P1 (108 aa).

Residues 67–108 (PAAAPAEAGGEEKKEEEKKEEEEKEEEVSEEEALAGLSALFG) are disordered. Acidic residues predominate over residues 84-99 (KKEEEEKEEEVSEEEA).

It belongs to the eukaryotic ribosomal protein P1/P2 family. As to quaternary structure, part of the 50S ribosomal subunit. Homodimer, it forms part of the ribosomal stalk which helps the ribosome interact with GTP-bound translation factors. Forms a heptameric uL10/P0(P1)2(P1)2(P1)2 complex, where uL10/P0 forms an elongated spine to which the P1 dimers bind in a sequential fashion.

In terms of biological role, forms part of the ribosomal stalk, playing a central role in the interaction of the ribosome with GTP-bound translation factors. The stalk complex of P.horikoshii binds to E.coli large subunits and confers on them the ability to interact with eukaryotic elongation factors. Each succesive P1 dimer bound along the P0 spine increases the GTPase activity of elongation factors and increases translation by reconsituted ribosomes. The polypeptide is Large ribosomal subunit protein P1 (Pyrococcus horikoshii (strain ATCC 700860 / DSM 12428 / JCM 9974 / NBRC 100139 / OT-3)).